Here is an 877-residue protein sequence, read N- to C-terminus: Alanine--tRNA ligase (877 aa).

The Zn(2+) site is built by H567, H571, C669, and H673.

The protein belongs to the class-II aminoacyl-tRNA synthetase family. It depends on Zn(2+) as a cofactor.

It is found in the cytoplasm. The enzyme catalyses tRNA(Ala) + L-alanine + ATP = L-alanyl-tRNA(Ala) + AMP + diphosphate. Its function is as follows. Catalyzes the attachment of alanine to tRNA(Ala) in a two-step reaction: alanine is first activated by ATP to form Ala-AMP and then transferred to the acceptor end of tRNA(Ala). Also edits incorrectly charged Ser-tRNA(Ala) and Gly-tRNA(Ala) via its editing domain. In Lactobacillus delbrueckii subsp. bulgaricus (strain ATCC 11842 / DSM 20081 / BCRC 10696 / JCM 1002 / NBRC 13953 / NCIMB 11778 / NCTC 12712 / WDCM 00102 / Lb 14), this protein is Alanine--tRNA ligase.